The chain runs to 207 residues: Lipid A acyltransferase PagP (207 aa).

Residues 1 to 24 (MKFDLTAACTLSATLLVSSGTVFA) form the signal peptide. Residues His-79, Asp-122, and Ser-123 contribute to the active site.

Belongs to the lipid A palmitoyltransferase family. As to quaternary structure, homodimer.

The protein resides in the cell outer membrane. It carries out the reaction a lipid A + a 1,2-diacyl-sn-glycero-3-phosphocholine = a hepta-acyl lipid A + a 2-acyl-sn-glycero-3-phosphocholine. The enzyme catalyses a lipid IVA + a 1,2-diacyl-sn-glycero-3-phosphocholine = a lipid IVB + a 2-acyl-sn-glycero-3-phosphocholine. The catalysed reaction is a lipid IIA + a 1,2-diacyl-sn-glycero-3-phosphocholine = a lipid IIB + a 2-acyl-sn-glycero-3-phosphocholine. Its function is as follows. Transfers a fatty acid residue from the sn-1 position of a phospholipid to the N-linked hydroxyfatty acid chain on the proximal unit of lipid A or its precursors. This is Lipid A acyltransferase PagP from Photorhabdus laumondii subsp. laumondii (strain DSM 15139 / CIP 105565 / TT01) (Photorhabdus luminescens subsp. laumondii).